Here is a 2035-residue protein sequence, read N- to C-terminus: Proline-rich protein 12 (2035 aa).

Disordered regions lie at residues 210–280 (GGGV…ERAL), 292–311 (RPASAQPPPPPPPAHSLQHY), 329–584 (CSPL…GAPG), and 645–685 (QAPS…GTPY). Pro residues predominate over residues 223–240 (QTPPYRPGPPDPPPPPRH). Over residues 249-261 (ASSSAATAAEPSS) the composition is skewed to low complexity. Pro residues predominate over residues 296 to 305 (AQPPPPPPPA). Residues Ser-330 and Ser-338 each carry the phosphoserine modification. Positions 338 to 364 (SPGAGEPSKGGPSGATAGAAGRATGPE) are enriched in low complexity. The span at 365 to 377 (TAGGGAAGGGGGY) shows a compositional bias: gly residues. Low complexity-rich tracts occupy residues 408 to 429 (STATPKCQSLGGPAAAYAAGKA) and 437 to 455 (SQAYSPGQPQGLLGPQAYG). Positions 476-487 (PPQPPSGPPPPG) are enriched in pro residues. Polar residues-rich tracts occupy residues 490-501 (TCQSYSPDQLQG) and 520-534 (GLPTASPSLSYSTGH). Residues 540–555 (GHGGGWGPSSLGGGGE) are compositionally biased toward gly residues. Ser-648 carries the post-translational modification Phosphoserine. The span at 670-681 (GLGGSGGAGGAP) shows a compositional bias: gly residues. Phosphothreonine is present on Thr-735. Disordered stretches follow at residues 755-844 (AFLQ…PLQL), 851-870 (HGLEPTAPSPRLRPEESLEP), 879-920 (GALE…APRF), and 946-1061 (EMFG…CSTK). Residues 830-841 (PQPPPPPPPPMP) are compositionally biased toward pro residues. Ser-859 carries the post-translational modification Phosphoserine. Over residues 1031–1046 (SAPPPPPPPPPPPPVS) the composition is skewed to pro residues. Phosphoserine occurs at positions 1070 and 1128. Disordered regions lie at residues 1112–1244 (RRLP…DHNS), 1288–1355 (PLYQ…SPCK), 1367–1567 (TLPS…GEGI), and 1662–1839 (HRPP…PGRL). Residues 1190–1199 (KPRGRGRGRG) are compositionally biased toward basic residues. Residues 1200–1214 (RKAEEMGGTRLEPLK) show a composition bias toward basic and acidic residues. Lys-1214 is modified (N6-acetyllysine). Thr-1295 bears the Phosphothreonine mark. Ser-1299 bears the Phosphoserine mark. The segment covering 1314–1329 (QPPPPTVPTVPHPAPS) has biased composition (pro residues). A phosphoserine mark is found at Ser-1372, Ser-1373, and Ser-1378. A compositionally biased stretch (pro residues) spans 1449–1529 (PPTPPPAPTP…PPEEPPAPSP (81 aa)). Basic and acidic residues predominate over residues 1535-1547 (PDARPLHLAKKQE). A Phosphothreonine modification is found at Thr-1555. The residue at position 1562 (Ser-1562) is a Phosphoserine. The span at 1698–1709 (ETPEKMTSEKPP) shows a compositional bias: basic and acidic residues. Residue Thr-1699 is modified to Phosphothreonine. Positions 1710–1730 (EPAPEPAVPEPPAPEKPSPPR) are enriched in pro residues. Basic and acidic residues predominate over residues 1731–1768 (PVEKEKEKEKEKEKEKERVTRPLRSERATSGRQMRTDR). The segment covering 1769 to 1779 (SLATGQSTTSR) has biased composition (polar residues). The segment covering 1817–1828 (SSSDSESSPGAP) has biased composition (low complexity). Ser-1924 is subject to Phosphoserine.

Expressed in brain.

It localises to the nucleus. It is found in the postsynaptic density. The protein localises to the synapse. The protein resides in the synaptosome. This Mus musculus (Mouse) protein is Proline-rich protein 12.